The following is a 107-amino-acid chain: N(4)-acetylcytidine amidohydrolase (107 aa).

The region spanning threonine 6 to valine 102 is the ASCH domain. Lysine 20 (proton acceptor) is an active-site residue. The active-site Nucleophile is threonine 23. Glutamate 73 (proton donor) is an active-site residue.

It belongs to the N(4)-acetylcytidine amidohydrolase family.

It catalyses the reaction N(4)-acetylcytidine + H2O = cytidine + acetate + H(+). The catalysed reaction is N(4)-acetyl-2'-deoxycytidine + H2O = 2'-deoxycytidine + acetate + H(+). The enzyme catalyses N(4)-acetylcytosine + H2O = cytosine + acetate + H(+). In terms of biological role, catalyzes the hydrolysis of N(4)-acetylcytidine (ac4C). The chain is N(4)-acetylcytidine amidohydrolase from Edwardsiella ictaluri (strain 93-146).